Reading from the N-terminus, the 397-residue chain is Phosphoribulokinase, chloroplastic (397 aa).

The N-terminal 44 residues, 1–44 (MAVSAYTVPTTSHLGFNQKKQLFFCNKSAYKRVSFSSRPCVITC), are a transit peptide targeting the chloroplast. Cysteine 62 and cysteine 101 are joined by a disulfide.

Belongs to the phosphoribulokinase family.

The protein resides in the plastid. It is found in the chloroplast. The catalysed reaction is D-ribulose 5-phosphate + ATP = D-ribulose 1,5-bisphosphate + ADP + H(+). It participates in carbohydrate biosynthesis; Calvin cycle. Light regulated via thioredoxin by reversible oxidation/reduction of sulfhydryl/disulfide groups. The protein is Phosphoribulokinase, chloroplastic of Mesembryanthemum crystallinum (Common ice plant).